Here is a 51-residue protein sequence, read N- to C-terminus: MREKIKLVSSAGTGHFYTTKKNKRNTPEKIEIKKYDPVVRKHVAYKEAKIK.

This sequence belongs to the bacterial ribosomal protein bL33 family.

The protein is Large ribosomal subunit protein bL33 of Marinobacter nauticus (strain ATCC 700491 / DSM 11845 / VT8) (Marinobacter aquaeolei).